The chain runs to 507 residues: Decapping nuclease RAI1 (507 aa).

A substrate-binding site is contributed by Arg-73. Position 230 (Glu-230) interacts with a divalent metal cation. 2 residues coordinate substrate: Cys-272 and Glu-289. A divalent metal cation is bound by residues Asp-291, Glu-306, and Leu-307. Substrate contacts are provided by Lys-308 and Gln-340.

This sequence belongs to the DXO/Dom3Z family. In terms of assembly, interacts with RAT1; the interaction is direct, stabilizes RAT1 protein structure and stimulates its exoribonuclease activity. The interaction also stimulates RAI1 pyrophosphohydrolase activity, probably by recruiting it to mRNA substrates. A divalent metal cation is required as a cofactor.

It localises to the nucleus. It carries out the reaction a 5'-end NAD(+)-phospho-ribonucleoside in mRNA + H2O = a 5'-end phospho-ribonucleoside in mRNA + NAD(+) + H(+). The enzyme catalyses a 5'-end (N(7)-methyl 5'-triphosphoguanosine)-ribonucleoside-ribonucleotide in mRNA + H2O = a (N(7)-methyl 5'-triphosphoguanosine)-nucleoside + a 5'-end phospho-ribonucleoside in mRNA + H(+). The catalysed reaction is a 5'-end triphospho-ribonucleoside in mRNA + H2O = a 5'-end phospho-ribonucleoside in mRNA + diphosphate + H(+). Functionally, decapping enzyme for NAD-capped RNAs: specifically hydrolyzes the nicotinamide adenine dinucleotide (NAD) cap from a subset of RNAs by removing the entire NAD moiety from the 5'-end of an NAD-capped RNA. The NAD-cap is present at the 5'-end of some RNAs and snoRNAs. In contrast to the canonical 5'-end N7 methylguanosine (m7G) cap, the NAD cap promotes mRNA decay. Also acts as a non-canonical decapping enzyme that removes the entire cap structure of m7G capped or incompletely capped RNAs. Has decapping activity toward incomplete 5'-end m7G cap mRNAs such as unmethylated 5'-end-capped RNA (cap0), while it has no activity toward 2'-O-ribose methylated m7G cap (cap1). Also possesses RNA 5'-pyrophosphohydrolase activity by hydrolyzing the 5'-end triphosphate to release pyrophosphates. Stimulates exoribonuclease activity of Rat1, allowing it to degrade RNAs with stable secondary structure more effectively. The chain is Decapping nuclease RAI1 (RAI1) from Mycosarcoma maydis (Corn smut fungus).